A 268-amino-acid chain; its full sequence is Nickel import ATP-binding protein NikE (268 aa).

An ABC transporter domain is found at 4–252 (LNVCGLSHHY…SSDAGRVLQN (249 aa)). Residue 45 to 52 (GRSGCGKS) coordinates ATP.

Belongs to the ABC transporter superfamily. Nickel importer (TC 3.A.1.5.3) family. The complex is composed of two ATP-binding proteins (NikD and NikE), two transmembrane proteins (NikB and NikC) and a solute-binding protein (NikA).

The protein resides in the cell inner membrane. It carries out the reaction Ni(2+)(out) + ATP + H2O = Ni(2+)(in) + ADP + phosphate + H(+). Its function is as follows. Part of the ABC transporter complex NikABCDE involved in nickel import. Responsible for energy coupling to the transport system. In Shigella flexneri serotype 5b (strain 8401), this protein is Nickel import ATP-binding protein NikE.